The following is a 130-amino-acid chain: Large ribosomal subunit protein bL12 (130 aa).

It belongs to the bacterial ribosomal protein bL12 family. As to quaternary structure, homodimer. Part of the ribosomal stalk of the 50S ribosomal subunit. Forms a multimeric L10(L12)X complex, where L10 forms an elongated spine to which 2 to 4 L12 dimers bind in a sequential fashion. Binds GTP-bound translation factors.

Forms part of the ribosomal stalk which helps the ribosome interact with GTP-bound translation factors. Is thus essential for accurate translation. The sequence is that of Large ribosomal subunit protein bL12 from Cutibacterium acnes (strain DSM 16379 / KPA171202) (Propionibacterium acnes).